Here is a 392-residue protein sequence, read N- to C-terminus: Anhydro-N-acetylmuramic acid kinase (392 aa).

22-29 is an ATP binding site; it reads GTSMDGVD.

This sequence belongs to the anhydro-N-acetylmuramic acid kinase family.

The catalysed reaction is 1,6-anhydro-N-acetyl-beta-muramate + ATP + H2O = N-acetyl-D-muramate 6-phosphate + ADP + H(+). It functions in the pathway amino-sugar metabolism; 1,6-anhydro-N-acetylmuramate degradation. The protein operates within cell wall biogenesis; peptidoglycan recycling. Its function is as follows. Catalyzes the specific phosphorylation of 1,6-anhydro-N-acetylmuramic acid (anhMurNAc) with the simultaneous cleavage of the 1,6-anhydro ring, generating MurNAc-6-P. Is required for the utilization of anhMurNAc either imported from the medium or derived from its own cell wall murein, and thus plays a role in cell wall recycling. In Burkholderia pseudomallei (strain 1106a), this protein is Anhydro-N-acetylmuramic acid kinase.